The primary structure comprises 148 residues: Large ribosomal subunit protein uL11 (148 aa).

The segment at 89–108 (EKKKGSGAHKPGKEKVGQVT) is disordered.

Belongs to the universal ribosomal protein uL11 family. In terms of assembly, part of the ribosomal stalk of the 50S ribosomal subunit. Interacts with L10 and the large rRNA to form the base of the stalk. L10 forms an elongated spine to which L12 dimers bind in a sequential fashion forming a multimeric L10(L12)X complex. Post-translationally, one or more lysine residues are methylated.

Its function is as follows. Forms part of the ribosomal stalk which helps the ribosome interact with GTP-bound translation factors. The protein is Large ribosomal subunit protein uL11 of Anaeromyxobacter dehalogenans (strain 2CP-1 / ATCC BAA-258).